The following is a 377-amino-acid chain: UDP-N-acetylglucosamine--N-acetylmuramyl-(pentapeptide) pyrophosphoryl-undecaprenol N-acetylglucosamine transferase (377 aa).

UDP-N-acetyl-alpha-D-glucosamine contacts are provided by residues 29-31 (TAG), N142, R179, S213, and Q308.

The protein belongs to the glycosyltransferase 28 family. MurG subfamily.

The protein localises to the cell membrane. It carries out the reaction di-trans,octa-cis-undecaprenyl diphospho-N-acetyl-alpha-D-muramoyl-L-alanyl-D-glutamyl-meso-2,6-diaminopimeloyl-D-alanyl-D-alanine + UDP-N-acetyl-alpha-D-glucosamine = di-trans,octa-cis-undecaprenyl diphospho-[N-acetyl-alpha-D-glucosaminyl-(1-&gt;4)]-N-acetyl-alpha-D-muramoyl-L-alanyl-D-glutamyl-meso-2,6-diaminopimeloyl-D-alanyl-D-alanine + UDP + H(+). Its pathway is cell wall biogenesis; peptidoglycan biosynthesis. Its function is as follows. Cell wall formation. Catalyzes the transfer of a GlcNAc subunit on undecaprenyl-pyrophosphoryl-MurNAc-pentapeptide (lipid intermediate I) to form undecaprenyl-pyrophosphoryl-MurNAc-(pentapeptide)GlcNAc (lipid intermediate II). The sequence is that of UDP-N-acetylglucosamine--N-acetylmuramyl-(pentapeptide) pyrophosphoryl-undecaprenol N-acetylglucosamine transferase from Saccharopolyspora erythraea (strain ATCC 11635 / DSM 40517 / JCM 4748 / NBRC 13426 / NCIMB 8594 / NRRL 2338).